A 275-amino-acid chain; its full sequence is Bis(5'-nucleosyl)-tetraphosphatase, symmetrical (275 aa).

The protein belongs to the Ap4A hydrolase family.

It carries out the reaction P(1),P(4)-bis(5'-adenosyl) tetraphosphate + H2O = 2 ADP + 2 H(+). Its function is as follows. Hydrolyzes diadenosine 5',5'''-P1,P4-tetraphosphate to yield ADP. The polypeptide is Bis(5'-nucleosyl)-tetraphosphatase, symmetrical (Haemophilus influenzae (strain PittEE)).